The chain runs to 359 residues: Flavonoid 8-O-methyltransferase 1 (359 aa).

Asp-223 contributes to the S-adenosyl-L-methionine binding site. His-261 functions as the Proton acceptor in the catalytic mechanism.

This sequence belongs to the class I-like SAM-binding methyltransferase superfamily. Cation-independent O-methyltransferase family. In terms of tissue distribution, expressed in leaves and trichomes, especially in cv. SD and cv. EMX-1, but barely in cv. MC and cv. SW.

The enzyme catalyses an 8-hydroxyflavone + S-adenosyl-L-methionine = an 8-methoxyflavone + S-adenosyl-L-homocysteine + H(+). It carries out the reaction 4',7,8-trihydroxyflavone + S-adenosyl-L-methionine = 4',7-dihydroxy-8-methoxyflavone + S-adenosyl-L-homocysteine + H(+). It catalyses the reaction 7,8-dihydroxyflavone + S-adenosyl-L-methionine = 7-hydroxy-8-methoxyflavone + S-adenosyl-L-homocysteine + H(+). The catalysed reaction is 3',4',7,8-tetrahydroxyflavone + S-adenosyl-L-methionine = 3',4,7-trihydroxy-8-methoxyflavone + S-adenosyl-L-homocysteine + H(+). The protein operates within flavonoid metabolism. Strongly inhibited by gardenin B (GARD B). Functionally, cation-independent flavonoid 8-O-methyltransferase involved in the biosynthesis of polymethoxylated flavonoids natural products such as nevadensin and salvigenin, aroma compounds which contribute to the flavor of sweet basil, and exhibit pharmacological activities such as anti-allergic, anti-oxidant, antibacterial, anti-proliferative, and anti-inflammatory effects. Catalyzes S-adenosylmethionine-dependent regioselective 8-O-methylation of flavonoids; mediates likely the conversion of pilosin (PIL) to nevadensin (NEV) and of 8-hydroxysalvigenin (8-OH-SALV) to gardenin B (GARD B). Can also use 3',4',7,8-tetrahydroxyflavone as substrate. Accepts other unnatural O-diphenols including 7,8,4'-trihydroxy-flavone and 7-O-methyl-8-hydroxy-flavone, and, with a lower efficiency, 7,8-dihydroxy-flavone, as substrates. The polypeptide is Flavonoid 8-O-methyltransferase 1 (Ocimum basilicum (Sweet basil)).